The chain runs to 473 residues: Venom prothrombin activator vestarin-D1 (473 aa).

Residues 1 to 20 (MAPQLLLCLIQTFLWSLPEA) form the signal peptide. The propeptide occupies 21–40 (ESNVFLKSNVANRFLQRTKR). The region spanning 41-86 (ANSGFEEIYPANFERECVEERCSKEEAREVFEDDEKTEAFWTVYVD) is the Gla domain. A 4-carboxyglutamate mark is found at glutamate 46, glutamate 47, glutamate 54, glutamate 56, glutamate 59, glutamate 60, glutamate 65, glutamate 66, glutamate 69, glutamate 72, and glutamate 75. A disulfide bridge links cysteine 57 with cysteine 62. Residues 86 to 122 (DGDQCLSNPCHYGGTCKDGIGSYTCTCLAGYEGKNCE) enclose the EGF-like 1; calcium-binding domain. Intrachain disulfides connect cysteine 90/cysteine 101, cysteine 95/cysteine 110, cysteine 112/cysteine 121, cysteine 129/cysteine 140, cysteine 136/cysteine 149, cysteine 151/cysteine 164, cysteine 172/cysteine 335, cysteine 235/cysteine 240, cysteine 383/cysteine 397, and cysteine 408/cysteine 436. Residue serine 92 is glycosylated (O-linked (Hex...) serine). The EGF-like 2 domain occupies 129-164 (CRVDNGNCWHFCKPVQNDTQCSCAEGYRLGDNGFSC). A propeptide spans 182–228 (REASLPDFQTDFSDDYDAIDENNLIETVQSQSATLLKKSDNPNPDIR) (activation peptide). In terms of domain architecture, Peptidase S1 spans 229–460 (IVNGLDCKLG…FLPWIKTIMR (232 aa)). Residue histidine 270 is the Charge relay system of the active site. Asparagine 273 is a glycosylation site (N-linked (GlcNAc...) asparagine). Aspartate 315 (charge relay system) is an active-site residue. Catalysis depends on serine 412, which acts as the Charge relay system.

This sequence belongs to the peptidase S1 family. Snake venom subfamily. In terms of assembly, heterodimer of a light chain and a heavy chain; disulfide-linked. In terms of processing, the vitamin K-dependent, enzymatic carboxylation of some glutamate residues allows the modified protein to bind calcium. In terms of tissue distribution, expressed by the venom gland.

It localises to the secreted. It carries out the reaction Selective cleavage of Arg-|-Thr and then Arg-|-Ile bonds in prothrombin to form thrombin.. Functionally, snake prothrombin activator that attacks the hemostatic system of prey. This protein is functionally similar to blood coagulation factor Xa. The chain is Venom prothrombin activator vestarin-D1 from Demansia vestigiata (Lesser black whip snake).